The primary structure comprises 190 residues: Probable nicotinate-nucleotide adenylyltransferase (190 aa).

Belongs to the NadD family.

It carries out the reaction nicotinate beta-D-ribonucleotide + ATP + H(+) = deamido-NAD(+) + diphosphate. Its pathway is cofactor biosynthesis; NAD(+) biosynthesis; deamido-NAD(+) from nicotinate D-ribonucleotide: step 1/1. Functionally, catalyzes the reversible adenylation of nicotinate mononucleotide (NaMN) to nicotinic acid adenine dinucleotide (NaAD). In Borrelia hermsii (strain HS1 / DAH), this protein is Probable nicotinate-nucleotide adenylyltransferase.